The following is a 125-amino-acid chain: Interleukin-6 (125 aa).

Cys-16 and Cys-26 are oxidised to a cystine.

This sequence belongs to the IL-6 superfamily. In terms of assembly, component of a hexamer of two molecules each of IL6, IL6R and IL6ST; first binds to IL6R to associate with the signaling subunit IL6ST. Interacts with IL6R (via the N-terminal ectodomain); this interaction may be affected by IL6R-binding with SORL1, hence decreasing IL6 cis signaling. Interacts with SORL1 (via the N-terminal ectodomain); this interaction leads to IL6 internalization and lysosomal degradation. May form a trimeric complex with the soluble SORL1 ectodomain and soluble IL6R receptor; this interaction might stabilize circulating IL6, hence promoting IL6 trans signaling.

The protein resides in the secreted. Cytokine with a wide variety of biological functions in immunity, tissue regeneration, and metabolism. Binds to IL6R, then the complex associates to the signaling subunit IL6ST/gp130 to trigger the intracellular IL6-signaling pathway. The interaction with the membrane-bound IL6R and IL6ST stimulates 'classic signaling', whereas the binding of IL6 and soluble IL6R to IL6ST stimulates 'trans-signaling'. Alternatively, 'cluster signaling' occurs when membrane-bound IL6:IL6R complexes on transmitter cells activate IL6ST receptors on neighboring receiver cells. Its function is as follows. IL6 is a potent inducer of the acute phase response. Rapid production of IL6 contributes to host defense during infection and tissue injury, but excessive IL6 synthesis is involved in disease pathology. In the innate immune response, is synthesized by myeloid cells, such as macrophages and dendritic cells, upon recognition of pathogens through toll-like receptors (TLRs) at the site of infection or tissue injury. In the adaptive immune response, is required for the differentiation of B cells into immunoglobulin-secreting cells. Plays a major role in the differentiation of CD4(+) T cell subsets. Essential factor for the development of T follicular helper (Tfh) cells that are required for the induction of germinal-center formation. Required to drive naive CD4(+) T cells to the Th17 lineage. Also required for proliferation of myeloma cells and the survival of plasmablast cells. Functionally, acts as an essential factor in bone homeostasis and on vessels directly or indirectly by induction of VEGF, resulting in increased angiogenesis activity and vascular permeability. Induces, through 'trans-signaling' and synergistically with IL1B and TNF, the production of VEGF. Involved in metabolic controls, is discharged into the bloodstream after muscle contraction increasing lipolysis and improving insulin resistance. 'Trans-signaling' in central nervous system also regulates energy and glucose homeostasis. Mediates, through GLP-1, crosstalk between insulin-sensitive tissues, intestinal L cells and pancreatic islets to adapt to changes in insulin demand. Also acts as a myokine. Plays a protective role during liver injury, being required for maintenance of tissue regeneration. Also has a pivotal role in iron metabolism by regulating HAMP/hepcidin expression upon inflammation or bacterial infection. Through activation of IL6ST-YAP-NOTCH pathway, induces inflammation-induced epithelial regeneration. In Neovison vison (American mink), this protein is Interleukin-6 (IL6).